A 697-amino-acid polypeptide reads, in one-letter code: Polyribonucleotide nucleotidyltransferase (697 aa).

Residues Asp-488 and Asp-494 each contribute to the Mg(2+) site. The KH domain occupies 555–614; that stretch reads PTLLTLKINPDKIRDVIGKGGATIRALTEETGCTIDIEDDGSVKIYGETREKADEAVRRV. The S1 motif domain maps to 624-692; sequence GAIYEGKVTR…QRGRIKLSMK (69 aa).

The protein belongs to the polyribonucleotide nucleotidyltransferase family. In terms of assembly, component of the RNA degradosome, which is a multiprotein complex involved in RNA processing and mRNA degradation. It depends on Mg(2+) as a cofactor.

It is found in the cytoplasm. The enzyme catalyses RNA(n+1) + phosphate = RNA(n) + a ribonucleoside 5'-diphosphate. Functionally, involved in mRNA degradation. Catalyzes the phosphorolysis of single-stranded polyribonucleotides processively in the 3'- to 5'-direction. In Alcanivorax borkumensis (strain ATCC 700651 / DSM 11573 / NCIMB 13689 / SK2), this protein is Polyribonucleotide nucleotidyltransferase.